A 584-amino-acid chain; its full sequence is Endogenous retrovirus group FC1 Env polyprotein (584 aa).

The N-terminal stretch at 1-22 (MARPSPLCLLLLLTLLPPIVPS) is a signal peptide. Over 23 to 514 (NSLLTEPPFR…NYGGGWWQSP (492 aa)) the chain is Extracellular. Asn-69 and Asn-247 each carry an N-linked (GlcNAc...) asparagine glycan. The short motif at 251–254 (CFLC) is the CXXC element. N-linked (GlcNAc...) asparagine glycans are attached at residues Asn-272, Asn-276, Asn-308, Asn-313, Asn-322, Asn-334, Asn-342, and Asn-346. Residues 388–413 (PLVIGVSLTSSLVASGLGTGAIVHFI) are fusion peptide. A CKS-17 motif is present at residues 449–465 (MQNRRALDLLTADKGGT). A disulfide bond links Cys-466 and Cys-473. The CX6CC signature appears at 466 to 474 (CMFLGEECC). An N-linked (GlcNAc...) asparagine glycan is attached at Asn-478. The chain crosses the membrane as a helical span at residues 515-540 (LTTWIIPFISPILIICLLLLIAPCVL). The Cytoplasmic portion of the chain corresponds to 541 to 584 (KFIKNRISEVSRVTVNQMLLHPYSRLPTSEDHYDVALTQQEAAR).

The protein belongs to the gamma type-C retroviral envelope protein family. HERV class-I F(c)1 env subfamily. As to quaternary structure, the surface (SU) and transmembrane (TM) proteins form a heterodimer. SU and TM are attached by noncovalent interactions or by a labile interchain disulfide bond. In terms of processing, specific enzymatic cleavages in vivo yield the mature SU and TM proteins. Post-translationally, the CXXC motif is highly conserved across a broad range of retroviral envelope proteins. It is thought to participate in the formation of a labile disulfide bond possibly with the CX6CC motif present in the transmembrane protein.

It is found in the virion. The protein localises to the cell membrane. Retroviral envelope proteins mediate receptor recognition and membrane fusion during early infection. Endogenous envelope proteins may have kept, lost or modified their original function during evolution. This endogenous envelope protein has lost its original fusogenic properties. Its function is as follows. SU mediates receptor recognition. Functionally, TM anchors the envelope heterodimer to the viral membrane through one transmembrane domain. The other hydrophobic domain, called fusion peptide, mediates fusion of the viral membrane with the target cell membrane. This chain is Endogenous retrovirus group FC1 Env polyprotein (ERVFC1), found in Pan troglodytes (Chimpanzee).